Here is an 82-residue protein sequence, read N- to C-terminus: MKILCIFLTFVFTVSCGPSVPQKKTREVAERKRECQLVRGACKPECNSWEYVYYYCNVNPCCAVWEYQKPIINKITSKLHQK.

Residues 1-16 (MKILCIFLTFVFTVSC) form the signal peptide. 3 cysteine pairs are disulfide-bonded: C35–C61, C42–C56, and C46–C62.

Belongs to the beta-defensin family.

The protein resides in the secreted. Has antibacterial activity. The sequence is that of Beta-defensin 113 (DEFB113) from Homo sapiens (Human).